Here is an 88-residue protein sequence, read N- to C-terminus: MKRSRFTEEQIIGILREQEAGVATAEVCRRHGVSSATFYKWKAKFGGLDVSEARRLKALEDENARLKRMLADAMLDNVALKDLLGKKW.

It belongs to the transposase 8 family.

The polypeptide is Insertion element ISR1 uncharacterized 10 kDa protein A3 (Rhizobium sp).